Here is a 121-residue protein sequence, read N- to C-terminus: Large ribosomal subunit protein uL14c (121 aa).

It belongs to the universal ribosomal protein uL14 family. In terms of assembly, part of the 50S ribosomal subunit.

The protein localises to the plastid. It localises to the chloroplast. Binds to 23S rRNA. The protein is Large ribosomal subunit protein uL14c of Thalassiosira pseudonana (Marine diatom).